Here is a 373-residue protein sequence, read N- to C-terminus: Leucine aminopeptidase 1 (373 aa).

Residues 1–18 (MKLLSVLALSATATSVLG) form the signal peptide. Zn(2+)-binding residues include His-176 and Asp-195. Asn-196 is a glycosylation site (N-linked (GlcNAc...) asparagine). 2 residues coordinate Zn(2+): Glu-234 and Asp-261. Residue Asn-288 is glycosylated (N-linked (GlcNAc...) asparagine). Cysteines 310 and 314 form a disulfide. His-343 is a Zn(2+) binding site. N-linked (GlcNAc...) asparagine glycosylation occurs at Asn-348.

It belongs to the peptidase M28 family. M28E subfamily. In terms of assembly, monomer. It depends on Zn(2+) as a cofactor.

It localises to the secreted. Its activity is regulated as follows. Activity is inhibited by EDTA, o-phenanthroline, bestatin and amastatin. Its function is as follows. Extracellular aminopeptidase which contributes to pathogenicity. The sequence is that of Leucine aminopeptidase 1 (LAP1) from Trichophyton rubrum (Athlete's foot fungus).